We begin with the raw amino-acid sequence, 242 residues long: 1-(5-phosphoribosyl)-5-[(5-phosphoribosylamino)methylideneamino] imidazole-4-carboxamide isomerase (242 aa).

D10 serves as the catalytic Proton acceptor. D132 functions as the Proton donor in the catalytic mechanism.

The protein belongs to the HisA/HisF family.

It localises to the cytoplasm. It catalyses the reaction 1-(5-phospho-beta-D-ribosyl)-5-[(5-phospho-beta-D-ribosylamino)methylideneamino]imidazole-4-carboxamide = 5-[(5-phospho-1-deoxy-D-ribulos-1-ylimino)methylamino]-1-(5-phospho-beta-D-ribosyl)imidazole-4-carboxamide. It participates in amino-acid biosynthesis; L-histidine biosynthesis; L-histidine from 5-phospho-alpha-D-ribose 1-diphosphate: step 4/9. In Methanothrix thermoacetophila (strain DSM 6194 / JCM 14653 / NBRC 101360 / PT) (Methanosaeta thermophila), this protein is 1-(5-phosphoribosyl)-5-[(5-phosphoribosylamino)methylideneamino] imidazole-4-carboxamide isomerase.